Consider the following 192-residue polypeptide: dTTP/UTP pyrophosphatase (192 aa).

D71 serves as the catalytic Proton acceptor.

It belongs to the Maf family. YhdE subfamily. The cofactor is a divalent metal cation.

It localises to the cytoplasm. It carries out the reaction dTTP + H2O = dTMP + diphosphate + H(+). The enzyme catalyses UTP + H2O = UMP + diphosphate + H(+). Nucleoside triphosphate pyrophosphatase that hydrolyzes dTTP and UTP. May have a dual role in cell division arrest and in preventing the incorporation of modified nucleotides into cellular nucleic acids. This is dTTP/UTP pyrophosphatase from Clostridium kluyveri (strain NBRC 12016).